The sequence spans 23 residues: Gastrin-releasing peptide (23 aa).

Met-23 bears the Methionine amide mark.

It belongs to the bombesin/neuromedin-B/ranatensin family.

It is found in the secreted. It localises to the cytoplasmic vesicle. The protein resides in the secretory vesicle lumen. In terms of biological role, stimulates the release of gastrin and other gastrointestinal hormones. This chain is Gastrin-releasing peptide (grp), found in Oncorhynchus mykiss (Rainbow trout).